A 789-amino-acid polypeptide reads, in one-letter code: Endonuclease MutS2 (789 aa).

334–341 (GPNTGGKT) lines the ATP pocket. Residues 690–714 (PEKDIQQSGTGKIMKSKTGDTKSEV) are disordered. Residues 714 to 789 (VDVRGKNLEE…GMGVTIVELK (76 aa)) enclose the Smr domain.

It belongs to the DNA mismatch repair MutS family. MutS2 subfamily. In terms of assembly, homodimer. Binds to stalled ribosomes, contacting rRNA.

Functionally, endonuclease that is involved in the suppression of homologous recombination and thus may have a key role in the control of bacterial genetic diversity. In terms of biological role, acts as a ribosome collision sensor, splitting the ribosome into its 2 subunits. Detects stalled/collided 70S ribosomes which it binds and splits by an ATP-hydrolysis driven conformational change. Acts upstream of the ribosome quality control system (RQC), a ribosome-associated complex that mediates the extraction of incompletely synthesized nascent chains from stalled ribosomes and their subsequent degradation. Probably generates substrates for RQC. This is Endonuclease MutS2 from Alkaliphilus metalliredigens (strain QYMF).